The chain runs to 457 residues: uncharacterized protein (457 aa).

Lysine 75 is modified (N6-(pyridoxal phosphate)lysine).

Pyridoxal 5'-phosphate serves as cofactor.

This is an uncharacterized protein from Sinorhizobium fredii (strain NBRC 101917 / NGR234).